The sequence spans 466 residues: Sucrose-6-phosphate hydrolase (466 aa).

Substrate-binding positions include 38–41, Gln-57, 100–101, 159–160, and Glu-218; these read LLND, YS, and RD. The active site involves Asp-41.

The protein resides in the cytoplasm. The catalysed reaction is Hydrolysis of terminal non-reducing beta-D-fructofuranoside residues in beta-D-fructofuranosides.. The protein operates within glycan biosynthesis; sucrose metabolism. Functionally, hydrolyzes sucrose and sucrose-6P, but fails to hydrolyze any of the phosphorylated isomers of sucrose and other phospho-D-glucosides, including maltose-6'P and trehalose-6P. The protein is Sucrose-6-phosphate hydrolase (scrB) of Klebsiella pneumoniae.